A 368-amino-acid chain; its full sequence is 7,8-didemethyl-8-hydroxy-5-deazariboflavin synthase (368 aa).

Positions 36-272 constitute a Radical SAM core domain; that stretch reads LSYCRNVFLP…EEVSVQVPPN (237 aa). [4Fe-4S] cluster is bound by residues Cys50, Cys54, and Cys57.

This sequence belongs to the radical SAM superfamily. CofG family. Consists of two subunits, CofG and CofH. It depends on [4Fe-4S] cluster as a cofactor.

The catalysed reaction is 5-amino-5-(4-hydroxybenzyl)-6-(D-ribitylimino)-5,6-dihydrouracil + S-adenosyl-L-methionine = 7,8-didemethyl-8-hydroxy-5-deazariboflavin + 5'-deoxyadenosine + L-methionine + NH4(+) + H(+). Its pathway is cofactor biosynthesis; coenzyme F0 biosynthesis. Its function is as follows. Catalyzes the radical-mediated synthesis of 7,8-didemethyl-8-hydroxy-5-deazariboflavin from 5-amino-5-(4-hydroxybenzyl)-6-(D-ribitylimino)-5,6-dihydrouracil. The polypeptide is 7,8-didemethyl-8-hydroxy-5-deazariboflavin synthase (Haloarcula marismortui (strain ATCC 43049 / DSM 3752 / JCM 8966 / VKM B-1809) (Halobacterium marismortui)).